A 562-amino-acid polypeptide reads, in one-letter code: Scaffold protein FimL (562 aa).

As to quaternary structure, interacts with PilG and FimV.

Its subcellular location is the cytoplasm. Functionally, regulates multiple virulence functions including type IV pilus (T4P)-mediated assembly and twitching motility as well as cAMP-dependent virulence gene expression. Regulates intracellular cyclic AMP (cAMP) levels through the activation of adenylate cyclase CyaB. Also functions as a scaffold linking FimV and PilG at the pole, where type IV pilus (T4P), the Chp chemosensory system and the CyaB adenylate cyclase interact. The protein is Scaffold protein FimL (fimL) of Pseudomonas aeruginosa (strain ATCC 15692 / DSM 22644 / CIP 104116 / JCM 14847 / LMG 12228 / 1C / PRS 101 / PAO1).